The chain runs to 30 residues: LIM and SH3 domain protein 1 (30 aa).

Met1 is modified (N-acetylmethionine). Positions 5 to 30 (CARCGKIVYPTEKVNCLDKFWHKACF) constitute an LIM zinc-binding domain.

As to quaternary structure, interacts with F-actin. Interacts with ANKRD54. Interacts with KBTBD10. Post-translationally, phosphorylated.

It localises to the cytoplasm. Its subcellular location is the cell cortex. The protein resides in the cytoskeleton. Functionally, plays an important role in the regulation of dynamic actin-based, cytoskeletal activities. Agonist-dependent changes in LASP1 phosphorylation may also serve to regulate actin-associated ion transport activities, not only in the parietal cell but also in certain other F-actin-rich secretory epithelial cell types. In Sus scrofa (Pig), this protein is LIM and SH3 domain protein 1 (LASP1).